The primary structure comprises 341 residues: HTH-type transcriptional repressor PurR (341 aa).

The HTH lacI-type domain occupies 2–56; it reads ATIKDVAKRAGVSTTTVSHVINKTRFVAEETKAAVRAAIKELHYSPSAVARSLKV. A DNA-binding region (H-T-H motif) is located at residues 4 to 23; it reads IKDVAKRAGVSTTTVSHVIN. A DNA-binding region spans residues 48 to 56; that stretch reads SAVARSLKV. 5 residues coordinate hypoxanthine: tyrosine 73, arginine 190, threonine 192, phenylalanine 221, and aspartate 275.

Homodimer.

It participates in purine metabolism; purine nucleotide biosynthesis [regulation]. In terms of biological role, is the main repressor of the genes involved in the de novo synthesis of purine nucleotides, regulating purB, purC, purEK, purF, purHD, purL, purMN and guaBA expression. PurR is allosterically activated to bind its cognate DNA by binding the purine corepressors, hypoxanthine or guanine, thereby effecting transcription repression. The protein is HTH-type transcriptional repressor PurR of Pectobacterium atrosepticum (strain SCRI 1043 / ATCC BAA-672) (Erwinia carotovora subsp. atroseptica).